Here is an 889-residue protein sequence, read N- to C-terminus: Mixed-linked glucan synthase 2 (889 aa).

A disordered region spans residues 34 to 53 (AGADGQNGRRSPVAKRVNDG). Helical transmembrane passes span 93–113 (ILHP…AFFA) and 123–143 (GVWL…SWVL). Residue Asp213 is part of the active site. A coiled-coil region spans residues 265-293 (ELMSDHRRVRREYEEFKVRIDSLSSTIRQ). Asp411 and Asp413 together coordinate substrate. Residue Asp579 is part of the active site. Transmembrane regions (helical) follow at residues 655 to 675 (TYPI…MWLI), 685 to 705 (FGEY…IGMF), 723 to 743 (FYMI…ALKL), 777 to 797 (LLIP…VAVG), 811 to 831 (LAVL…PFAL), and 842 to 862 (AVLF…YVAF).

This sequence belongs to the glycosyltransferase 2 family. Plant cellulose synthase-like F subfamily.

It localises to the golgi apparatus membrane. In terms of biological role, catalyzes both beta-1,3 and beta-1,4 glycosidic linkage on beta-D-glucan. Essential for (1,3;1,4)-beta-D-glucans synthesis in grasses and cereals (Poaceae). The mixed-linked glucans (which are not present in walls of dicotyledons or most other monocotyledonous plants) are particularly important constituents of the walls of the starchy endosperm and aleurone cells of cereal grains such as oats, wheat, rice and barley. They can account for up to 70% by weight of the wall. The sequence is that of Mixed-linked glucan synthase 2 (CSLF2) from Oryza sativa subsp. japonica (Rice).